The chain runs to 325 residues: Acetyl-coenzyme A carboxylase carboxyl transferase subunit alpha (325 aa).

Residues 38–292 enclose the CoA carboxyltransferase C-terminal domain; it reads KLEKRLHALE…DQVLEKSLKQ (255 aa).

The protein belongs to the AccA family. As to quaternary structure, acetyl-CoA carboxylase is a heterohexamer composed of biotin carboxyl carrier protein (AccB), biotin carboxylase (AccC) and two subunits each of ACCase subunit alpha (AccA) and ACCase subunit beta (AccD).

The protein resides in the cytoplasm. It carries out the reaction N(6)-carboxybiotinyl-L-lysyl-[protein] + acetyl-CoA = N(6)-biotinyl-L-lysyl-[protein] + malonyl-CoA. Its pathway is lipid metabolism; malonyl-CoA biosynthesis; malonyl-CoA from acetyl-CoA: step 1/1. In terms of biological role, component of the acetyl coenzyme A carboxylase (ACC) complex. First, biotin carboxylase catalyzes the carboxylation of biotin on its carrier protein (BCCP) and then the CO(2) group is transferred by the carboxyltransferase to acetyl-CoA to form malonyl-CoA. This is Acetyl-coenzyme A carboxylase carboxyl transferase subunit alpha from Halalkalibacterium halodurans (strain ATCC BAA-125 / DSM 18197 / FERM 7344 / JCM 9153 / C-125) (Bacillus halodurans).